A 371-amino-acid chain; its full sequence is DNA replication and repair protein RecF (371 aa).

Position 30-37 (30-37 (GENAQGKT)) interacts with ATP.

It belongs to the RecF family.

It is found in the cytoplasm. Functionally, the RecF protein is involved in DNA metabolism; it is required for DNA replication and normal SOS inducibility. RecF binds preferentially to single-stranded, linear DNA. It also seems to bind ATP. This chain is DNA replication and repair protein RecF, found in Staphylococcus epidermidis (strain ATCC 35984 / DSM 28319 / BCRC 17069 / CCUG 31568 / BM 3577 / RP62A).